A 578-amino-acid chain; its full sequence is Arginine--tRNA ligase (578 aa).

The 'HIGH' region motif lies at 123–133 (PNIAKEMHVGH).

The protein belongs to the class-I aminoacyl-tRNA synthetase family. Monomer.

The protein resides in the cytoplasm. It catalyses the reaction tRNA(Arg) + L-arginine + ATP = L-arginyl-tRNA(Arg) + AMP + diphosphate. The protein is Arginine--tRNA ligase of Baumannia cicadellinicola subsp. Homalodisca coagulata.